We begin with the raw amino-acid sequence, 369 residues long: Translocating chain-associated membrane protein 1-like 1 (369 aa).

The Cytoplasmic portion of the chain corresponds to 1-29; the sequence is MGLRKKSTKNPPVLSQEFILQNHADIVSC. A helical membrane pass occupies residues 30 to 50; that stretch reads VGMFFLLGLVFEGTAEASIVF. At 51–81 the chain is on the lumenal side; it reads LTLQHSVAVPAAEEQATGSKSLYYYGVKDLA. Residues 82-102 form a helical membrane-spanning segment; it reads TVFFYMLVAIIIHATIQEYVL. Over 103–121 the chain is Cytoplasmic; the sequence is DKINKRMQFTKAKQNKFNE. The TLC domain maps to 117 to 326; it reads NKFNESGQFS…TLWLQRWVED (210 aa). The chain crosses the membrane as a helical span at residues 122–142; it reads SGQFSVFYFFSCIWGTFILIS. The Lumenal portion of the chain corresponds to 143 to 164; that stretch reads ENCLSDPTLIWKARPHSMMTFQ. The helical transmembrane segment at 165 to 185 threads the bilayer; that stretch reads MKFFYISQLAYWFHAFPELYF. At 186–196 the chain is on the cytoplasmic side; sequence QKTKKQDIPRQ. The chain crosses the membrane as a helical span at residues 197 to 215; sequence LVYIGLHLFHITGAYLLYL. Residues 216–219 are Lumenal-facing; sequence NHLG. The chain crosses the membrane as a helical span at residues 220–242; it reads LLLLVLHYFVELLSHMCGLFYFS. Over 243-249 the chain is Cytoplasmic; the sequence is DEKYQKG. A helical transmembrane segment spans residues 250 to 270; the sequence is ISLWAIVFILGRLVTLIVSVL. Residues 271 to 297 lie on the Lumenal side of the membrane; the sequence is TVGFHLAGSQNRNPDALTGNVNVLAAK. A helical membrane pass occupies residues 298–318; it reads IAVLSSSCTIQAYVTWNLITL. The Cytoplasmic segment spans residues 319–369; that stretch reads WLQRWVEDSNIQASCMKKKRSRSSKKRTENGVGVETSNRVDCPPKRKEKSS. Residues 335-369 form a disordered region; sequence KKKRSRSSKKRTENGVGVETSNRVDCPPKRKEKSS. Residues 360–369 are compositionally biased toward basic and acidic residues; that stretch reads CPPKRKEKSS.

The protein belongs to the TRAM family.

The protein resides in the endoplasmic reticulum membrane. Stimulatory or required for the translocation of secretory proteins across the ER membrane. The protein is Translocating chain-associated membrane protein 1-like 1 (TRAM1L1) of Homo sapiens (Human).